A 169-amino-acid polypeptide reads, in one-letter code: Monothiol glutaredoxin-S15, mitochondrial (169 aa).

A mitochondrion-targeting transit peptide spans 1–37 (MAASLSSRLIKGIANLKAVRSSRLTSASVYQNGMMRF). The tract at residues 38–61 (SSTVPSDSDTHDDFKPTQKVPPDS) is disordered. Residues 66 to 168 (KDIVENDVKD…QKLKDVSGNQ (103 aa)) form the Glutaredoxin domain. Lys-83 is a glutathione binding site. Cys-91 serves as a coordination point for [2Fe-2S] cluster. Residues Lys-120, Phe-132, and 145–146 (SD) each bind glutathione.

Belongs to the glutaredoxin family. CGFS subfamily. As to quaternary structure, [2Fe-2S]-bridged holo-homodimer. Interacts in vitro with SUFE1, BOLA1, BOLA2 and BOLA4. Interacts in vivo only with BOLA4.

It is found in the mitochondrion. Functionally, may only reduce GSH-thiol disulfides, but not protein disulfides. Participates probably to the maturation of iron-sulfur proteins and to the regulation of the redox state of the BOLA proteins. The polypeptide is Monothiol glutaredoxin-S15, mitochondrial (Arabidopsis thaliana (Mouse-ear cress)).